The following is a 278-amino-acid chain: TATA box-binding protein-associated factor RNA polymerase I subunit D (278 aa).

Disordered stretches follow at residues L19 to E71 and K88 to P115. Phosphoserine is present on S23. Basic residues-rich tracts occupy residues R43–V53 and K88–Y99. Phosphoserine occurs at positions 138 and 234.

Component of the transcription factor SL1/TIF-IB complex, composed of TBP and at least TAF1A, TAF1B, TAF1C and TAF1D. Interacts with UBTF.

It is found in the nucleus. Functionally, component of the transcription factor SL1/TIF-IB complex, which is involved in the assembly of the PIC (preinitiation complex) during RNA polymerase I-dependent transcription. The rate of PIC formation probably is primarily dependent on the rate of association of SL1/TIF-IB with the rDNA promoter. SL1/TIF-IB is involved in stabilization of nucleolar transcription factor 1/UBTF on rDNA. Formation of SL1/TIF-IB excludes the association of TBP with TFIID subunits. In Pongo abelii (Sumatran orangutan), this protein is TATA box-binding protein-associated factor RNA polymerase I subunit D (TAF1D).